Reading from the N-terminus, the 254-residue chain is Fasciclin-like arabinogalactan protein 7 (254 aa).

Residues 1 to 22 form the signal peptide; sequence MAKMQLSIFIAVVALIVCSASA. One can recognise an FAS1 domain in the interval 44–186; the sequence is NVNLTELLSV…VAVYQVNRVL (143 aa). N-linked (GlcNAc...) asparagine glycans are attached at residues N46, N78, N104, and N130. The tract at residues 203 to 233 is disordered; it reads APAPIVSAPSDSPSVADSEGASSPKSSHKNS. The span at 206-220 shows a compositional bias: low complexity; the sequence is PIVSAPSDSPSVADS. Over residues 222 to 233 the composition is skewed to polar residues; it reads GASSPKSSHKNS. Residue N232 is the site of GPI-anchor amidated asparagine attachment. Positions 233–254 are cleaved as a propeptide — removed in mature form; sequence SGQKLLLAPISMVISGLVALFL.

Belongs to the fasciclin-like AGP family.

Its subcellular location is the cell membrane. In terms of biological role, may be a cell surface adhesion protein. In Arabidopsis thaliana (Mouse-ear cress), this protein is Fasciclin-like arabinogalactan protein 7 (FLA7).